The following is a 71-amino-acid chain: ATP synthase F(0) complex subunit e, mitochondrial (71 aa).

Position 34 is an N6-acetyllysine (lysine 34). Serine 68 is modified (phosphoserine).

Belongs to the ATPase e subunit family. As to quaternary structure, component of the ATP synthase complex composed at least of ATP5F1A/subunit alpha, ATP5F1B/subunit beta, ATP5MC1/subunit c (homooctomer), MT-ATP6/subunit a, MT-ATP8/subunit 8, ATP5ME/subunit e, ATP5MF/subunit f, ATP5MG/subunit g, ATP5MK/subunit k, ATP5MJ/subunit j, ATP5F1C/subunit gamma, ATP5F1D/subunit delta, ATP5F1E/subunit epsilon, ATP5PF/subunit F6, ATP5PB/subunit b, ATP5PD/subunit d, ATP5PO/subunit OSCP. ATP synthase complex consists of a soluble F(1) head domain (subunits alpha(3) and beta(3)) - the catalytic core - and a membrane F(0) domain - the membrane proton channel (subunits c, a, 8, e, f, g, k and j). These two domains are linked by a central stalk (subunits gamma, delta, and epsilon) rotating inside the F1 region and a stationary peripheral stalk (subunits F6, b, d, and OSCP). Mammary gland, liver, kidney, heart, spleen, brain and lung.

It localises to the mitochondrion. Its subcellular location is the mitochondrion inner membrane. Functionally, subunit e, of the mitochondrial membrane ATP synthase complex (F(1)F(0) ATP synthase or Complex V) that produces ATP from ADP in the presence of a proton gradient across the membrane which is generated by electron transport complexes of the respiratory chain. ATP synthase complex consist of a soluble F(1) head domain - the catalytic core - and a membrane F(1) domain - the membrane proton channel. These two domains are linked by a central stalk rotating inside the F(1) region and a stationary peripheral stalk. During catalysis, ATP synthesis in the catalytic domain of F(1) is coupled via a rotary mechanism of the central stalk subunits to proton translocation. In vivo, can only synthesize ATP although its ATP hydrolase activity can be activated artificially in vitro. Part of the complex F(0) domain. This is ATP synthase F(0) complex subunit e, mitochondrial from Mus musculus (Mouse).